Consider the following 351-residue polypeptide: L-threonine 3-dehydrogenase (351 aa).

A Zn(2+)-binding site is contributed by Cys-39. Catalysis depends on charge relay system residues Thr-41 and His-44. 6 residues coordinate Zn(2+): His-64, Glu-65, Cys-94, Cys-97, Cys-100, and Cys-108. NAD(+) is bound by residues Ile-176, Asp-196, Arg-201, 271 to 273 (LGI), and 295 to 296 (IY).

Belongs to the zinc-containing alcohol dehydrogenase family. As to quaternary structure, homotetramer. It depends on Zn(2+) as a cofactor.

The protein resides in the cytoplasm. The enzyme catalyses L-threonine + NAD(+) = (2S)-2-amino-3-oxobutanoate + NADH + H(+). It participates in amino-acid degradation; L-threonine degradation via oxydo-reductase pathway; glycine from L-threonine: step 1/2. Catalyzes the NAD(+)-dependent oxidation of L-threonine to 2-amino-3-ketobutyrate. The protein is L-threonine 3-dehydrogenase of Francisella tularensis subsp. holarctica (strain OSU18).